A 488-amino-acid polypeptide reads, in one-letter code: N-succinylglutamate 5-semialdehyde dehydrogenase 2 (488 aa).

Position 221–226 (221–226) interacts with NAD(+); the sequence is GSSNTG. Residues Glu244 and Cys278 contribute to the active site.

The protein belongs to the aldehyde dehydrogenase family. AstD subfamily.

It carries out the reaction N-succinyl-L-glutamate 5-semialdehyde + NAD(+) + H2O = N-succinyl-L-glutamate + NADH + 2 H(+). It participates in amino-acid degradation; L-arginine degradation via AST pathway; L-glutamate and succinate from L-arginine: step 4/5. Catalyzes the NAD-dependent reduction of succinylglutamate semialdehyde into succinylglutamate. The chain is N-succinylglutamate 5-semialdehyde dehydrogenase 2 from Pseudoalteromonas translucida (strain TAC 125).